The sequence spans 204 residues: Superoxide dismutase [Mn] (204 aa).

Mn(2+) is bound at residue H27. 2 positions are modified to phosphothreonine: T34 and T70. Mn(2+) contacts are provided by H82, D164, and H168.

The protein belongs to the iron/manganese superoxide dismutase family. As to quaternary structure, homodimer. It depends on Mn(2+) as a cofactor.

It catalyses the reaction 2 superoxide + 2 H(+) = H2O2 + O2. Destroys superoxide anion radicals which are normally produced within the cells and which are toxic to biological systems. In Geobacillus stearothermophilus (Bacillus stearothermophilus), this protein is Superoxide dismutase [Mn] (sodA).